The following is a 199-amino-acid chain: Peroxiredoxin-1 (199 aa).

Position 2 is an N-acetylserine (Ser-2). The region spanning 6–165 (AKIGYPAPNF…ILRLVQAFQF (160 aa)) is the Thioredoxin domain. Position 7 is an N6-acetyllysine; alternate (Lys-7). Lys-7 participates in a covalent cross-link: Glycyl lysine isopeptide (Lys-Gly) (interchain with G-Cter in SUMO2); alternate. An N6-acetyllysine modification is found at Lys-16. Phosphoserine is present on Ser-32. The active-site Cysteine sulfenic acid (-SOH) intermediate is the Cys-52. Thr-90 is subject to Phosphothreonine. Lys-120 is covalently cross-linked (Glycyl lysine isopeptide (Lys-Gly) (interchain with G-Cter in SUMO2)). Lys-136 bears the N6-acetyllysine mark. The segment at 176 to 199 (GWKPGSDTIKPDVQKSKEYFSKQK) is disordered. Basic and acidic residues predominate over residues 184-199 (IKPDVQKSKEYFSKQK). A Glycyl lysine isopeptide (Lys-Gly) (interchain with G-Cter in SUMO1) cross-link involves residue Lys-185. Position 197 is an N6-acetyllysine (Lys-197).

The protein belongs to the peroxiredoxin family. AhpC/Prx1 subfamily. As to quaternary structure, homodimer; disulfide-linked, upon oxidation. 5 homodimers assemble to form a ring-like decamer. Interacts with GDPD5; forms a mixed-disulfide with GDPD5. Interacts with SESN1 and SESN2. Interacts with FAM107A. In terms of processing, phosphorylated on Thr-90 during the M-phase, which leads to a decrease in enzymatic activity. Acetylation increases reducing activity and resistance to superoxidation. Deacetylated by HDAC6 which decreases reducing activity.

It is found in the cytoplasm. The enzyme catalyses a hydroperoxide + [thioredoxin]-dithiol = an alcohol + [thioredoxin]-disulfide + H2O. Thiol-specific peroxidase that catalyzes the reduction of hydrogen peroxide and organic hydroperoxides to water and alcohols, respectively. Plays a role in cell protection against oxidative stress by detoxifying peroxides and as sensor of hydrogen peroxide-mediated signaling events. Might participate in the signaling cascades of growth factors and tumor necrosis factor-alpha by regulating the intracellular concentrations of H(2)O(2). Reduces an intramolecular disulfide bond in GDPD5 that gates the ability to GDPD5 to drive postmitotic motor neuron differentiation. This Cricetulus griseus (Chinese hamster) protein is Peroxiredoxin-1 (PRDX1).